The primary structure comprises 296 residues: MVLMMGVPQHFALSTARDYWQLLKPRIMYLVVFTASTGMIMAPGTIHPLIGLVSALCIAMGSGAAGALNMWFDSDIDAVMSRTKTRPIPSGRISRAQALECGLALSLLSVFIMSLTVNYVSAILLACSIAFYAVVYTMVLKRRTPQNIVIGGIAGAFPPVIGWTSVTGIPSIESLLLFMIIFLWTPPHFWALSLLNRDEYKLAGIPMLSVYSVQSTKNHIMGYSLLLFIVALLPGLYVAETVLYEIIATSLGAVFLTHAYCLLKEVGEPSPKACMGLFSFSIYYLFLIFSAIALCS.

9 helical membrane-spanning segments follow: residues isoleucine 27 to histidine 47, proline 48 to leucine 68, alanine 98 to asparagine 118, valine 120 to leucine 140, isoleucine 148 to glycine 168, leucine 175 to leucine 195, histidine 219 to alanine 239, valine 242 to leucine 262, and cysteine 274 to leucine 294.

Belongs to the UbiA prenyltransferase family. Protoheme IX farnesyltransferase subfamily.

The protein localises to the cell inner membrane. It carries out the reaction heme b + (2E,6E)-farnesyl diphosphate + H2O = Fe(II)-heme o + diphosphate. It functions in the pathway porphyrin-containing compound metabolism; heme O biosynthesis; heme O from protoheme: step 1/1. Functionally, converts heme B (protoheme IX) to heme O by substitution of the vinyl group on carbon 2 of heme B porphyrin ring with a hydroxyethyl farnesyl side group. The chain is Protoheme IX farnesyltransferase from Anaplasma phagocytophilum (strain HZ).